Consider the following 208-residue polypeptide: Urease accessory protein UreE (208 aa).

The tract at residues 145-165 is disordered; sequence EGGAYSAGGHGHTHAPAATPV.

Belongs to the UreE family.

The protein localises to the cytoplasm. In terms of biological role, involved in urease metallocenter assembly. Binds nickel. Probably functions as a nickel donor during metallocenter assembly. The sequence is that of Urease accessory protein UreE from Polaromonas naphthalenivorans (strain CJ2).